The sequence spans 560 residues: Putative transport protein ESA_02488 (560 aa).

5 consecutive transmembrane segments (helical) span residues 8–28, 32–52, 66–86, 91–111, and 158–178; these read LLNGNYILLLFVVLALGLCLG, LGSVQLGNSIGVLVVSLLLGQ, FMLFIFCVGVEAGPNFFSIFF, NYLMLALVMVGSALLIALGLG, and HLSLGYALTYLIGLVSLIFGA. 2 consecutive RCK C-terminal domains span residues 200 to 288 and 292 to 373; these read RGLD…SFRN and VFDR…RIGF. 5 consecutive transmembrane segments (helical) span residues 383–403, 406–426, 447–467, 475–495, and 539–559; these read LLAFCAFFIVGLMIGMITFQF, FSFGIGNAAGLLFAGIMLGFL, FGLMVFMAGVGLSAGSGIGHG, MLFAGLIVSLLPVVICFLFGA, and YAIANVLLTLAGTLIVIIWPG.

This sequence belongs to the AAE transporter (TC 2.A.81) family. YbjL subfamily.

Its subcellular location is the cell membrane. This Cronobacter sakazakii (strain ATCC BAA-894) (Enterobacter sakazakii) protein is Putative transport protein ESA_02488.